The chain runs to 703 residues: Bifunctional arginine dihydrolase/ornithine cyclodeaminase AgrE (703 aa).

The arginine dihydrolase stretch occupies residues 10-269 (CPPDHYDVDY…GAAKCLTLRV (260 aa)). Residues asparagine 22, aspartate 65, asparagine 71, arginine 90, and arginine 139 each coordinate L-arginine. Residue asparagine 22 participates in L-ornithine binding. L-ornithine-binding residues include arginine 90, arginine 139, and histidine 168. Catalysis depends on histidine 168, which acts as the Proton donor/acceptor. Positions 170 and 258 each coordinate L-arginine. Cysteine 264 is a binding site for L-ornithine. The active-site Nucleophile is cysteine 264. Residues 285 to 694 (SRIIRIEGHL…SLLTQQLDKL (410 aa)) form an ornithine cyclodeaminase region. Residues asparagine 524, alanine 525, aspartate 603, serine 635, methionine 636, leucine 637, histidine 638, aspartate 656, aspartate 679, and valine 680 each coordinate NAD(+).

This sequence in the N-terminal section; belongs to the DDAH family. It in the C-terminal section; belongs to the AgrE/ArgZ ornithine cyclodeaminase family. Homotetramer. NAD(+) serves as cofactor.

The enzyme catalyses L-arginine + 2 H2O + 2 H(+) = L-ornithine + 2 NH4(+) + CO2. It catalyses the reaction L-ornithine = L-proline + NH4(+). With respect to regulation, ornithine cyclodeaminase activity is inhibited by ATP. In terms of biological role, bifunctional enzyme involved in a cyanobacterial arginine utilization pathway that produces glutamate and enables cellular adaptation to nitrogen fluctuations. Catalyzes the hydrolysis of arginine to ornithine, with the release of ammonia and carbon dioxide. Then, catalyzes the conversion of ornithine to proline, with the release of ammonia. The chain is Bifunctional arginine dihydrolase/ornithine cyclodeaminase AgrE from Nostoc sp. (strain PCC 7120 / SAG 25.82 / UTEX 2576).